We begin with the raw amino-acid sequence, 211 residues long: Protein FAM167A (211 aa).

2 disordered regions span residues 1–30 (MSVP…DHLR) and 56–108 (EEQT…GKLE). Residues 120 to 153 (LRKELMEMRLQDQQLARQLMRLRSDIHKLKIEQT) adopt a coiled-coil conformation.

Belongs to the FAM167 (SEC) family.

The protein is Protein FAM167A (FAM167A) of Bos taurus (Bovine).